A 601-amino-acid polypeptide reads, in one-letter code: Protein FAM13C (601 aa).

Disordered regions lie at residues 82 to 134 (SMGN…PQSS) and 192 to 238 (DGQV…EDLQ). Positions 98-111 (ESGRNHGESQETEH) are enriched in basic and acidic residues. Ser-130 is subject to Phosphoserine. A compositionally biased stretch (low complexity) spans 200 to 217 (DPAPASTQSAPADSADPA). Ser-258 is subject to Phosphoserine. Disordered stretches follow at residues 268 to 304 (QRFN…KEPQ), 327 to 352 (FEQE…WMND), and 366 to 485 (KLSE…DPVS). Residues 282–294 (SSQQFMMPRSSSR) show a composition bias toward low complexity. The span at 327 to 342 (FEQEKKYRPSHGDKTS) shows a compositional bias: basic and acidic residues. A phosphoserine mark is found at Ser-405 and Ser-406. Residues 415–446 (VPEKREQTPPQDDGKGTKQDKNLIKPLYDRCR) show a composition bias toward basic and acidic residues. A compositionally biased stretch (acidic residues) spans 462 to 471 (QEEEDSDEDC).

It belongs to the FAM13 family.

The polypeptide is Protein FAM13C (Fam13c) (Mus musculus (Mouse)).